The chain runs to 259 residues: 3-dehydroquinate dehydratase (259 aa).

Residues 50–52 (EWR) and Arg-86 contribute to the 3-dehydroquinate site. His-147 (proton donor/acceptor) is an active-site residue. Catalysis depends on Lys-174, which acts as the Schiff-base intermediate with substrate. 3 residues coordinate 3-dehydroquinate: Arg-216, Ser-235, and Gln-239.

It belongs to the type-I 3-dehydroquinase family. In terms of assembly, homodimer.

It catalyses the reaction 3-dehydroquinate = 3-dehydroshikimate + H2O. It functions in the pathway metabolic intermediate biosynthesis; chorismate biosynthesis; chorismate from D-erythrose 4-phosphate and phosphoenolpyruvate: step 3/7. In terms of biological role, involved in the third step of the chorismate pathway, which leads to the biosynthesis of aromatic amino acids. Catalyzes the cis-dehydration of 3-dehydroquinate (DHQ) and introduces the first double bond of the aromatic ring to yield 3-dehydroshikimate. In Geobacillus sp. (strain WCH70), this protein is 3-dehydroquinate dehydratase.